Consider the following 401-residue polypeptide: Argininosuccinate synthase (401 aa).

A9–S17 serves as a coordination point for ATP. Y86 contributes to the L-citrulline binding site. G116 contacts ATP. The L-aspartate site is built by T118, N122, and D123. N122 lines the L-citrulline pocket. 5 residues coordinate L-citrulline: R126, S174, S183, E259, and Y271.

Belongs to the argininosuccinate synthase family. Type 1 subfamily. As to quaternary structure, homotetramer.

It localises to the cytoplasm. It catalyses the reaction L-citrulline + L-aspartate + ATP = 2-(N(omega)-L-arginino)succinate + AMP + diphosphate + H(+). Its pathway is amino-acid biosynthesis; L-arginine biosynthesis; L-arginine from L-ornithine and carbamoyl phosphate: step 2/3. This Bacillus mycoides (strain KBAB4) (Bacillus weihenstephanensis) protein is Argininosuccinate synthase.